Reading from the N-terminus, the 236-residue chain is NLP effector protein 3 (236 aa).

The N-terminal stretch at 1–19 (MNLLGFLAVVALSTASVQA) is a signal peptide. Residues 103 to 113 (AIMYSWYFPKD) carry the Conserved undecapeptide motif I motif. The short motif at 120-126 (GHRHDWE) is the Hepta-peptide GHRHDWE motif II element.

The protein belongs to the Necrosis inducing protein (NPP1) family.

Its subcellular location is the secreted. Its function is as follows. Secreted effector that contributes to virulence during infection by P.capsici. Induces distinct chlorosis at 3 days after inoculation of host C.annuum leaves, and all the chlorotic areas gradually turn brown and become moderately necrotic at 7 days after inoculation. Leads only to chlorotic areas, without necrosis at 7 days after non-host N.benthamiana leaves infection. Induces cell death in hot pepper. In Phytophthora capsici, this protein is NLP effector protein 3.